Here is a 156-residue protein sequence, read N- to C-terminus: MLYKNINEFEQVIDKTKRIMCLDFGEKKIGVALSDKTNLIAIPHSVYVRKNTRKDLGSLYGILIENDAGSMVIGLPLDLFGMGNELCDKVMLFANRMIKKYAINIYLHDERYSTAMATRVAKLANIKRKESQKIDDKIAAVLILQQVLDMVKIYQM.

The protein belongs to the YqgF nuclease family.

It is found in the cytoplasm. Functionally, could be a nuclease involved in processing of the 5'-end of pre-16S rRNA. This Ehrlichia ruminantium (strain Welgevonden) protein is Putative pre-16S rRNA nuclease.